The sequence spans 127 residues: Glycine cleavage system H protein (127 aa).

The Lipoyl-binding domain maps to 22 to 104 (KARIGITHFA…YEKAWMIVVE (83 aa)). Lysine 63 bears the N6-lipoyllysine mark.

It belongs to the GcvH family. As to quaternary structure, the glycine cleavage system is composed of four proteins: P, T, L and H. Requires (R)-lipoate as cofactor.

Functionally, the glycine cleavage system catalyzes the degradation of glycine. The H protein shuttles the methylamine group of glycine from the P protein to the T protein. In terms of biological role, is also involved in protein lipoylation via its role as an octanoyl/lipoyl carrier protein intermediate. The sequence is that of Glycine cleavage system H protein from Bacillus velezensis (strain DSM 23117 / BGSC 10A6 / LMG 26770 / FZB42) (Bacillus amyloliquefaciens subsp. plantarum).